An 83-amino-acid polypeptide reads, in one-letter code: Small ribosomal subunit protein bS20 (83 aa).

Belongs to the bacterial ribosomal protein bS20 family.

Binds directly to 16S ribosomal RNA. This chain is Small ribosomal subunit protein bS20, found in Leuconostoc citreum (strain KM20).